The primary structure comprises 91 residues: Small ribosomal subunit protein uS7 (91 aa).

This sequence belongs to the universal ribosomal protein uS7 family. As to quaternary structure, part of the 30S ribosomal subunit. Contacts proteins S9 and S11.

Its function is as follows. One of the primary rRNA binding proteins, it binds directly to 16S rRNA where it nucleates assembly of the head domain of the 30S subunit. Is located at the subunit interface close to the decoding center, probably blocks exit of the E-site tRNA. This chain is Small ribosomal subunit protein uS7 (rpsG), found in Apple proliferation phytoplasma.